The sequence spans 115 residues: Large ribosomal subunit protein bL19 (115 aa).

It belongs to the bacterial ribosomal protein bL19 family.

Its function is as follows. This protein is located at the 30S-50S ribosomal subunit interface and may play a role in the structure and function of the aminoacyl-tRNA binding site. The protein is Large ribosomal subunit protein bL19 of Yersinia pseudotuberculosis serotype O:1b (strain IP 31758).